We begin with the raw amino-acid sequence, 374 residues long: Methylthioribose-1-phosphate isomerase (374 aa).

The active-site Proton donor is Asp-251.

This sequence belongs to the eIF-2B alpha/beta/delta subunits family. MtnA subfamily.

It localises to the cytoplasm. Its subcellular location is the nucleus. The catalysed reaction is 5-(methylsulfanyl)-alpha-D-ribose 1-phosphate = 5-(methylsulfanyl)-D-ribulose 1-phosphate. Its pathway is amino-acid biosynthesis; L-methionine biosynthesis via salvage pathway; L-methionine from S-methyl-5-thio-alpha-D-ribose 1-phosphate: step 1/6. Catalyzes the interconversion of methylthioribose-1-phosphate (MTR-1-P) into methylthioribulose-1-phosphate (MTRu-1-P). The polypeptide is Methylthioribose-1-phosphate isomerase (IDI2) (Oryza sativa subsp. japonica (Rice)).